A 252-amino-acid chain; its full sequence is Probable S-methyl-5'-thioinosine phosphorylase (252 aa).

Phosphate contacts are provided by residues threonine 8 and 44-45 (RH). Methionine 173 lines the substrate pocket. Threonine 174 serves as a coordination point for phosphate. 197–199 (NYA) serves as a coordination point for substrate.

Belongs to the PNP/MTAP phosphorylase family. MTAP subfamily. Homotrimer.

It catalyses the reaction S-methyl-5'-thioinosine + phosphate = 5-(methylsulfanyl)-alpha-D-ribose 1-phosphate + hypoxanthine. It participates in purine metabolism; purine nucleoside salvage. Catalyzes the reversible phosphorylation of S-methyl-5'-thioinosine (MTI) to hypoxanthine and 5-methylthioribose-1-phosphate. Involved in the breakdown of S-methyl-5'-thioadenosine (MTA), a major by-product of polyamine biosynthesis. Catabolism of (MTA) occurs via deamination to MTI and phosphorolysis to hypoxanthine. The protein is Probable S-methyl-5'-thioinosine phosphorylase of Methanocaldococcus jannaschii (strain ATCC 43067 / DSM 2661 / JAL-1 / JCM 10045 / NBRC 100440) (Methanococcus jannaschii).